We begin with the raw amino-acid sequence, 135 residues long: Small ribosomal subunit protein uS12 (135 aa).

Residues 1-23 (MPTINQLVRKGRHSKTTKSDSPA) form a disordered region. Position 102 is a 3-methylthioaspartic acid (Asp102).

It belongs to the universal ribosomal protein uS12 family. As to quaternary structure, part of the 30S ribosomal subunit. Contacts proteins S8 and S17. May interact with IF1 in the 30S initiation complex.

Its function is as follows. With S4 and S5 plays an important role in translational accuracy. Functionally, interacts with and stabilizes bases of the 16S rRNA that are involved in tRNA selection in the A site and with the mRNA backbone. Located at the interface of the 30S and 50S subunits, it traverses the body of the 30S subunit contacting proteins on the other side and probably holding the rRNA structure together. The combined cluster of proteins S8, S12 and S17 appears to hold together the shoulder and platform of the 30S subunit. The polypeptide is Small ribosomal subunit protein uS12 (Lactobacillus gasseri (strain ATCC 33323 / DSM 20243 / BCRC 14619 / CIP 102991 / JCM 1131 / KCTC 3163 / NCIMB 11718 / NCTC 13722 / AM63)).